Here is a 121-residue protein sequence, read N- to C-terminus: Large ribosomal subunit protein uL22c (121 aa).

Belongs to the universal ribosomal protein uL22 family. Part of the 50S ribosomal subunit.

The protein resides in the plastid. It is found in the chloroplast. In terms of biological role, this protein binds specifically to 23S rRNA. Its function is as follows. The globular domain of the protein is located near the polypeptide exit tunnel on the outside of the subunit, while an extended beta-hairpin is found that lines the wall of the exit tunnel in the center of the 70S ribosome. The sequence is that of Large ribosomal subunit protein uL22c (rpl22) from Lemna minor (Common duckweed).